A 63-amino-acid chain; its full sequence is Metallothionein-2 (63 aa).

The segment at 1-30 is beta; the sequence is MDPQDCTCAAGDSCSCAGSCKCKNCRCQSC. The a divalent metal cation site is built by C6, C8, C14, C16, C20, C22, C25, C27, C30, C34, C35, C37, C38, C42, C45, C49, C51, C59, C61, and C62. Residues 31–63 form an alpha region; that stretch reads RKSCCSCCPASCSNCAKGCVCKEPSSSKCSCCH.

This sequence belongs to the metallothionein superfamily. Type 1 family.

Its function is as follows. Metallothioneins have a high content of cysteine residues that bind various heavy metals. This chain is Metallothionein-2, found in Columba livia (Rock dove).